The sequence spans 426 residues: Serine--tRNA ligase (426 aa).

232 to 234 serves as a coordination point for L-serine; the sequence is TAE. 263–265 contacts ATP; that stretch reads RSE. An L-serine-binding site is contributed by Glu286. 350–353 lines the ATP pocket; that stretch reads EISS. Ser385 is a binding site for L-serine.

It belongs to the class-II aminoacyl-tRNA synthetase family. Type-1 seryl-tRNA synthetase subfamily. Homodimer. The tRNA molecule binds across the dimer.

It is found in the cytoplasm. The enzyme catalyses tRNA(Ser) + L-serine + ATP = L-seryl-tRNA(Ser) + AMP + diphosphate + H(+). It catalyses the reaction tRNA(Sec) + L-serine + ATP = L-seryl-tRNA(Sec) + AMP + diphosphate + H(+). The protein operates within aminoacyl-tRNA biosynthesis; selenocysteinyl-tRNA(Sec) biosynthesis; L-seryl-tRNA(Sec) from L-serine and tRNA(Sec): step 1/1. In terms of biological role, catalyzes the attachment of serine to tRNA(Ser). Is also able to aminoacylate tRNA(Sec) with serine, to form the misacylated tRNA L-seryl-tRNA(Sec), which will be further converted into selenocysteinyl-tRNA(Sec). The polypeptide is Serine--tRNA ligase (Pediococcus pentosaceus (strain ATCC 25745 / CCUG 21536 / LMG 10740 / 183-1w)).